The chain runs to 144 residues: Cytochrome c oxidase subunit 4 isoform 1, mitochondrial (144 aa).

Residues 1–73 (SVVKSEDYAL…SFAEMNRGSN (73 aa)) are Mitochondrial matrix-facing. K4 carries the N6-acetyllysine; alternate modification. K4 bears the N6-succinyllysine; alternate mark. A phosphoserine mark is found at S31 and S33. The residue at position 35 (K35) is an N6-acetyllysine; alternate. K35 bears the N6-succinyllysine; alternate mark. Residue K42 is modified to N6-acetyllysine. A helical membrane pass occupies residues 74–99 (EWKTVVGAAMFFIGFTAILIILEKRY). Residues 100–144 (VYGPLPHTFDKEWVAMQTKRMLDLKVNPVDGLASKWDYDKKEWKK) are Mitochondrial intermembrane-facing.

The protein belongs to the cytochrome c oxidase IV family. In terms of assembly, component of the cytochrome c oxidase (complex IV, CIV), a multisubunit enzyme composed of 14 subunits. The complex is composed of a catalytic core of 3 subunits MT-CO1, MT-CO2 and MT-CO3, encoded in the mitochondrial DNA, and 11 supernumerary subunits COX4I, COX5A, COX5B, COX6A, COX6B, COX6C, COX7A, COX7B, COX7C, COX8 and NDUFA4, which are encoded in the nuclear genome. The complex exists as a monomer or a dimer and forms supercomplexes (SCs) in the inner mitochondrial membrane with NADH-ubiquinone oxidoreductase (complex I, CI) and ubiquinol-cytochrome c oxidoreductase (cytochrome b-c1 complex, complex III, CIII), resulting in different assemblies (supercomplex SCI(1)III(2)IV(1) and megacomplex MCI(2)III(2)IV(2)). Interacts with PHB2; the interaction decreases in absence of SPHK2. Interacts with AFG1L. Interacts with ABCB7; this interaction allows the regulation of cellular iron homeostasis and cellular reactive oxygen species (ROS) levels in cardiomyocytes. Interacts with FLVCR2; this interaction occurs in the absence of heme and is disrupted upon heme binding. Interacts with IRGC.

The protein resides in the mitochondrion inner membrane. Its pathway is energy metabolism; oxidative phosphorylation. Its function is as follows. Component of the cytochrome c oxidase, the last enzyme in the mitochondrial electron transport chain which drives oxidative phosphorylation. The respiratory chain contains 3 multisubunit complexes succinate dehydrogenase (complex II, CII), ubiquinol-cytochrome c oxidoreductase (cytochrome b-c1 complex, complex III, CIII) and cytochrome c oxidase (complex IV, CIV), that cooperate to transfer electrons derived from NADH and succinate to molecular oxygen, creating an electrochemical gradient over the inner membrane that drives transmembrane transport and the ATP synthase. Cytochrome c oxidase is the component of the respiratory chain that catalyzes the reduction of oxygen to water. Electrons originating from reduced cytochrome c in the intermembrane space (IMS) are transferred via the dinuclear copper A center (CU(A)) of subunit 2 and heme A of subunit 1 to the active site in subunit 1, a binuclear center (BNC) formed by heme A3 and copper B (CU(B)). The BNC reduces molecular oxygen to 2 water molecules using 4 electrons from cytochrome c in the IMS and 4 protons from the mitochondrial matrix. This chain is Cytochrome c oxidase subunit 4 isoform 1, mitochondrial (COX4I1), found in Aotus azarae (Azara's night monkey).